Reading from the N-terminus, the 280-residue chain is 4-hydroxy-3-methylbut-2-enyl diphosphate reductase (280 aa).

Residue cysteine 12 participates in [4Fe-4S] cluster binding. Histidine 40 and histidine 72 together coordinate (2E)-4-hydroxy-3-methylbut-2-enyl diphosphate. 2 residues coordinate dimethylallyl diphosphate: histidine 40 and histidine 72. Isopentenyl diphosphate is bound by residues histidine 40 and histidine 72. Position 94 (cysteine 94) interacts with [4Fe-4S] cluster. Position 122 (histidine 122) interacts with (2E)-4-hydroxy-3-methylbut-2-enyl diphosphate. Histidine 122 lines the dimethylallyl diphosphate pocket. Residue histidine 122 participates in isopentenyl diphosphate binding. The active-site Proton donor is the glutamate 124. Threonine 160 lines the (2E)-4-hydroxy-3-methylbut-2-enyl diphosphate pocket. Cysteine 188 is a [4Fe-4S] cluster binding site. (2E)-4-hydroxy-3-methylbut-2-enyl diphosphate-binding residues include serine 216, asparagine 218, and serine 260. Dimethylallyl diphosphate-binding residues include serine 216, asparagine 218, and serine 260. Residues serine 216, asparagine 218, and serine 260 each contribute to the isopentenyl diphosphate site.

This sequence belongs to the IspH family. Requires [4Fe-4S] cluster as cofactor.

It catalyses the reaction isopentenyl diphosphate + 2 oxidized [2Fe-2S]-[ferredoxin] + H2O = (2E)-4-hydroxy-3-methylbut-2-enyl diphosphate + 2 reduced [2Fe-2S]-[ferredoxin] + 2 H(+). The catalysed reaction is dimethylallyl diphosphate + 2 oxidized [2Fe-2S]-[ferredoxin] + H2O = (2E)-4-hydroxy-3-methylbut-2-enyl diphosphate + 2 reduced [2Fe-2S]-[ferredoxin] + 2 H(+). The protein operates within isoprenoid biosynthesis; dimethylallyl diphosphate biosynthesis; dimethylallyl diphosphate from (2E)-4-hydroxy-3-methylbutenyl diphosphate: step 1/1. Its pathway is isoprenoid biosynthesis; isopentenyl diphosphate biosynthesis via DXP pathway; isopentenyl diphosphate from 1-deoxy-D-xylulose 5-phosphate: step 6/6. In terms of biological role, catalyzes the conversion of 1-hydroxy-2-methyl-2-(E)-butenyl 4-diphosphate (HMBPP) into a mixture of isopentenyl diphosphate (IPP) and dimethylallyl diphosphate (DMAPP). Acts in the terminal step of the DOXP/MEP pathway for isoprenoid precursor biosynthesis. This Trichlorobacter lovleyi (strain ATCC BAA-1151 / DSM 17278 / SZ) (Geobacter lovleyi) protein is 4-hydroxy-3-methylbut-2-enyl diphosphate reductase.